Consider the following 257-residue polypeptide: Cytoplasmic envelopment protein 1 (257 aa).

This sequence belongs to the herpesviridae cytoplasmic envelopment protein 1 family.

The protein localises to the virion. The protein resides in the virion tegument. Its subcellular location is the host cytoplasm. It localises to the host Golgi apparatus. Functionally, plays a critical role in cytoplasmic virus egress. Participates in the final step of tegumentation and envelope acquisition within the host cytoplasm. The polypeptide is Cytoplasmic envelopment protein 1 (42) (Connochaetes taurinus (Blue wildebeest)).